Here is a 329-residue protein sequence, read N- to C-terminus: GTP 3',8-cyclase 1 (329 aa).

In terms of domain architecture, Radical SAM core spans Gly7–Pro230. Arg16 serves as a coordination point for GTP. [4Fe-4S] cluster is bound by residues Cys23 and Cys27. Tyr29 contributes to the S-adenosyl-L-methionine binding site. Cys30 is a binding site for [4Fe-4S] cluster. Arg65 is a GTP binding site. Gly69 lines the S-adenosyl-L-methionine pocket. Position 96 (Thr96) interacts with GTP. Ser120 provides a ligand contact to S-adenosyl-L-methionine. Lys157 is a GTP binding site. Met191 contacts S-adenosyl-L-methionine. [4Fe-4S] cluster contacts are provided by Cys255 and Cys258. Residue Arg260–Arg262 coordinates GTP. Cys272 provides a ligand contact to [4Fe-4S] cluster.

Belongs to the radical SAM superfamily. MoaA family. In terms of assembly, monomer and homodimer. [4Fe-4S] cluster is required as a cofactor.

The catalysed reaction is GTP + AH2 + S-adenosyl-L-methionine = (8S)-3',8-cyclo-7,8-dihydroguanosine 5'-triphosphate + 5'-deoxyadenosine + L-methionine + A + H(+). It functions in the pathway cofactor biosynthesis; molybdopterin biosynthesis. Catalyzes the cyclization of GTP to (8S)-3',8-cyclo-7,8-dihydroguanosine 5'-triphosphate. The polypeptide is GTP 3',8-cyclase 1 (moaA1) (Pseudomonas aeruginosa (strain ATCC 15692 / DSM 22644 / CIP 104116 / JCM 14847 / LMG 12228 / 1C / PRS 101 / PAO1)).